The sequence spans 542 residues: LysM domain-containing protein ARB_00327 (542 aa).

Residues 1–35 (MLSSVLFPAMRTLLLLKYVFSLISLSAICCQTVSA) form the signal peptide. Asn218, Asn298, Asn381, and Asn415 each carry an N-linked (GlcNAc...) asparagine glycan. The region spanning 264 to 310 (RWYGVKKGDYCNLIVLKFGITMDNFIFLNPALNSNCTNLYAEESYCV) is the LysM 1 domain. Residues 439–484 (DSDEPTPTTPITTSDDPTSTSATPTTPTTSSKPSPGAPTMTGQPSA) form a disordered region. Residues 443-472 (PTPTTPITTSDDPTSTSATPTTPTTSSKPS) show a composition bias toward low complexity. The LysM 2 domain occupies 487 to 534 (KWHTVTNGESCTVIPKTFGITLEQFLAWNPTVKSDCTENFWAGYAYCV).

It localises to the secreted. Its function is as follows. Might have a role in sequestration of chitin oligosaccharides (breakdown products of fungal cell walls that are released during invasion and act as triggers of host immunity) to dampen host defense. In Arthroderma benhamiae (strain ATCC MYA-4681 / CBS 112371) (Trichophyton mentagrophytes), this protein is LysM domain-containing protein ARB_00327.